Reading from the N-terminus, the 745-residue chain is Copper-transporting ATPase (745 aa).

One can recognise an HMA domain in the interval 1–67 (MKESFYIEGM…LIEKLGYSPK (67 aa)). At 1–83 (MKESFYIEGM…KKEFFSPNVK (83 aa)) the chain is on the cytoplasmic side. Residues Cys-12 and Cys-15 each coordinate Cu cation. The chain crosses the membrane as a helical span at residues 84–104 (LALAVIFTLFVVYLSMGAMLS). Over 105 to 124 (PSLLPESLLAIDNHSNFLNA) the chain is Extracellular. The chain crosses the membrane as a helical span at residues 125 to 144 (CLQLIGALIVMHLGRDFYIQ). The Cytoplasmic segment spans residues 145–151 (GFKALWH). The helical transmembrane segment at 152-172 (RQPNMSSLIAIGTSAALISSL) threads the bilayer. Residues 173-194 (WQLYLVYTNHYTDQWSYGHYYF) lie on the Extracellular side of the membrane. A helical transmembrane segment spans residues 195–215 (ESVCVILMFVMVGKRIENVSK). The Cytoplasmic portion of the chain corresponds to 216–343 (DKALDAMQAL…KAEISRLADK (128 aa)). A helical membrane pass occupies residues 344 to 366 (VSSVFVPSVIAISILAFVVWLII). At 367-379 (APKPDFWWNFGIA) the chain is on the extracellular side. The chain crosses the membrane as a helical span at residues 380–397 (LEVFVSVLVISCPCALGL). Residues 398–685 (ATPMSILVAN…KLSQATIKNI (288 aa)) are Cytoplasmic-facing. Catalysis depends on Asp-435, which acts as the 4-aspartylphosphate intermediate. Mg(2+) is bound by residues Asp-631 and Asp-635. The helical transmembrane segment at 686–705 (KENLFWAFCYNSVFIPLACG) threads the bilayer. Topologically, residues 706–716 (VLYKANLMLSP) are extracellular. A helical membrane pass occupies residues 717 to 735 (AIAGLAMSLSSVSVVLNSQ). Residues 736 to 745 (RLRNFKIKDH) are Cytoplasmic-facing.

The protein belongs to the cation transport ATPase (P-type) (TC 3.A.3) family. Type IB subfamily.

It localises to the cell membrane. The catalysed reaction is Cu(2+)(in) + ATP + H2O = Cu(2+)(out) + ADP + phosphate + H(+). Its function is as follows. Probably involved in copper export. The polypeptide is Copper-transporting ATPase (copA) (Helicobacter pylori (strain ATCC 700392 / 26695) (Campylobacter pylori)).